Reading from the N-terminus, the 1492-residue chain is MQRSPIEKANAFSKLFFRWPRPILKKGYRQKLELSDIYQIPSSDSADELSEMLEREWDRELATSKKNPKLVNALRRCFFWRFLFYGILLYFVEFTKAVQPLCLGRIIASYNAKNTYEREIAYYLALGLCLLFVVRTLFLHPAVFGLQHLGMQMRIALFSLIYKKILKMSSRVLDKIDTGQLVSLLSNNLNKFDEGVAVAHFVWIAPVQVVLLMGLIWNELTEFVFCGLGFLIMLALFQAWLGKKMMQYRDKRAGKINERLAITSEIIDNIQSVKVYCWEDAMEKIIDDIRQVELKLTRKVAYCRYFSSSAFFFSGFFVVFLSVVPYAFIHTIKLRRIFTTISYNIVLRMTVTRQFPSAIQTWYDSLGAIRKIQDFLHKDEHKTVEYNLTTKEVEMVNVTASWDEGIGELFEKVKQNDSERKMANGDDGLFFSNFSLHVTPVLKNISFKLEKGELLAIAGSTGSGKSSLLMMIMGELEPSDGKIKHSGRISYSPQVPWIMPGTIKDNIIFGLSYDEYRYTSVVNACQLEEDITVFPNKDKTVLGDGGITLSGGQRARISLARALYKDADLYLLDSPFSHLDVTTEKDIFESCLCKLMVNKTRILVTSKLEHLKKADKILLLHEGHCYFYGTFSELQGEKPDFSSQLLGSVHFDSFSAERRNSILTETFRRCSVSSGDGAGLGSYSETRKASFKQPPPEFNEKRKSSLIVNPITSNKKFSLVQTAMSYPQTNGMEDATSEPGERHFSLIPENELGEPTKPRSNIFKSELPFQAHRRQSVLALMTHSSTSPNKIHARRSAVRKMSMLSQTNFASSEIDIYSRRLSEDGSFEISEEINEEDLKECFADEEEIQNVTTTWSTYLRYVTTNRNLVFVLILCLVIFLAEVAASLAGLWIISGLAINTGSQTNDTSTDLSHLSVFSKFITNGSHYYIFYIYVGLADSFLALGVIRGLPLVHTLVTVSKDLHKQMLHSVLQGPMTAFNKMKAGRILNRFIKDTAIIDDMLPLTVFDFVQLILIVVGAICVVSVLQPYTLLAAIPVAVIFIMLRAYFLRTSQQLKQLESEARSPIFSHLITSLRGLWTVRAFGRQSYFETLFHKALNLHTANWFLYLSTLRWFQMRIDIVFVLFFIAVTFIAIATHDVGEGQVGIILTLAMNITSTLQWAVNSSIDVDGLMRSVSRVFKYIDIPPEGSETKNRHNANNPSDVLVIENKHLTKEWPSGGQMMVNNLTAKYTSDGRAVLQDLSFSVNAGQRVGLLGRTGAGKSTLLSALLRLLSTEGEIQIDGISWNSVSLQKWRKAFGVIPQKVFVFSGTFRKNLDPYEQWSDEEIWKVTEEVGLKSMIEQFPDKLNFVLVDGGYILSNGHKQLMCLARSILSKAKILLLDEPTAHLDPVTFQIIRKTLKHTFSNCTVILSEHRVEALLECQQFLVIEGCSVKQFDALQKLLTEASLFKQVFGHLDRAKLFTAHRRNSSKRKTRPKISALQEEAEEDLQETRL.

Residues 1–78 (MQRSPIEKAN…KLVNALRRCF (78 aa)) lie on the Cytoplasmic side of the membrane. Residues 79–99 (FWRFLFYGILLYFVEFTKAVQ) form a helical membrane-spanning segment. The ABC transmembrane type-1 1 domain maps to 82–366 (FLFYGILLYF…SAIQTWYDSL (285 aa)). Topologically, residues 100–123 (PLCLGRIIASYNAKNTYEREIAYY) are extracellular. The chain crosses the membrane as a helical span at residues 124-147 (LALGLCLLFVVRTLFLHPAVFGLQ). The Cytoplasmic portion of the chain corresponds to 148 to 196 (HLGMQMRIALFSLIYKKILKMSSRVLDKIDTGQLVSLLSNNLNKFDEGV). A helical transmembrane segment spans residues 197–217 (AVAHFVWIAPVQVVLLMGLIW). Residues 218–223 (NELTEF) lie on the Extracellular side of the membrane. Residues 224 to 244 (VFCGLGFLIMLALFQAWLGKK) form a helical membrane-spanning segment. Topologically, residues 245–299 (MMQYRDKRAGKINERLAITSEIIDNIQSVKVYCWEDAMEKIIDDIRQVELKLTRK) are cytoplasmic. Residues 300 to 320 (VAYCRYFSSSAFFFSGFFVVF) traverse the membrane as a helical segment. Residues 321–340 (LSVVPYAFIHTIKLRRIFTT) lie on the Extracellular side of the membrane. A helical membrane pass occupies residues 341 to 359 (ISYNIVLRMTVTRQFPSAI). The Cytoplasmic portion of the chain corresponds to 360 to 867 (QTWYDSLGAI…YLRYVTTNRN (508 aa)). ATP is bound by residues W402, S435, 459-466 (GSTGSGKS), and Q494. The 224-residue stretch at 424–647 (NGDDGLFFSN…KPDFSSQLLG (224 aa)) folds into the ABC transporter 1 domain. A disordered R region region spans residues 655–840 (SAERRNSILT…EEINEEDLKE (186 aa)). Residues 868–888 (LVFVLILCLVIFLAEVAASLA) traverse the membrane as a helical segment. The ABC transmembrane type-1 2 domain occupies 868 to 1169 (LVFVLILCLV…AVNSSIDVDG (302 aa)). The Extracellular portion of the chain corresponds to 889 to 932 (GLWIISGLAINTGSQTNDTSTDLSHLSVFSKFITNGSHYYIFYI). 2 N-linked (GlcNAc...) asparagine glycosylation sites follow: N905 and N923. A discontinuously helical membrane pass occupies residues 933-953 (YVGLADSFLALGVIRGLPLVH). Topologically, residues 954–1004 (TLVTVSKDLHKQMLHSVLQGPMTAFNKMKAGRILNRFIKDTAIIDDMLPLT) are cytoplasmic. The helical transmembrane segment at 1005 to 1025 (VFDFVQLILIVVGAICVVSVL) threads the bilayer. Residues 1026–1027 (QP) are Extracellular-facing. A helical membrane pass occupies residues 1028–1048 (YTLLAAIPVAVIFIMLRAYFL). Residues 1049 to 1109 (RTSQQLKQLE…TANWFLYLST (61 aa)) are Cytoplasmic-facing. The helical transmembrane segment at 1110-1130 (LRWFQMRIDIVFVLFFIAVTF) threads the bilayer. Residues 1131 to 1144 (IAIATHDVGEGQVG) are Extracellular-facing. A helical membrane pass occupies residues 1145–1165 (IILTLAMNITSTLQWAVNSSI). Residues 1166–1492 (DVDGLMRSVS…AEEDLQETRL (327 aa)) lie on the Cytoplasmic side of the membrane. The ABC transporter 2 domain maps to 1220 to 1453 (MMVNNLTAKY…ASLFKQVFGH (234 aa)). Residues Y1229 and 1254-1261 (GRTGAGKS) contribute to the ATP site. The span at 1465–1474 (RNSSKRKTRP) shows a compositional bias: basic residues. Residues 1465–1492 (RNSSKRKTRPKISALQEEAEEDLQETRL) are disordered. The span at 1481-1492 (EEAEEDLQETRL) shows a compositional bias: acidic residues. Positions 1483-1485 (AEE) match the PDZ-binding motif.

The protein belongs to the ABC transporter superfamily. ABCC family. CFTR transporter (TC 3.A.1.202) subfamily. In terms of assembly, monomer; does not require oligomerization for channel activity. May form oligomers in the membrane. In terms of processing, phosphorylated; cAMP treatment promotes phosphorylation and activates the channel. Dephosphorylation decreases the ATPase activity (in vitro). Phosphorylation at PKA sites activates the channel. Phosphorylation at PKC sites enhances the response to phosphorylation by PKA. In terms of tissue distribution, expressed in the rectal gland (at protein level).

It localises to the apical cell membrane. Its subcellular location is the early endosome membrane. The protein resides in the cell membrane. The protein localises to the recycling endosome membrane. It is found in the endoplasmic reticulum membrane. The catalysed reaction is ATP + H2O + closed Cl(-) channel = ADP + phosphate + open Cl(-) channel.. The enzyme catalyses chloride(in) = chloride(out). It catalyses the reaction hydrogencarbonate(in) = hydrogencarbonate(out). It carries out the reaction ATP + H2O = ADP + phosphate + H(+). Functionally, epithelial ion channel that plays an important role in the regulation of epithelial ion and water transport and fluid homeostasis. Mediates the transport of chloride ions across the cell membrane. Possesses an intrinsic ATPase activity and utilizes ATP to gate its channel; the passive flow of anions through the channel is gated by cycles of ATP binding and hydrolysis by the ATP-binding domains. The ion channel is also permeable to HCO(3)(-); selectivity depends on the extracellular chloride concentration. Exerts its function also by modulating the activity of other ion channels and transporters. Contributes to the regulation of the pH and the ion content of the epithelial fluid layer. In Squalus acanthias (Spiny dogfish), this protein is Cystic fibrosis transmembrane conductance regulator.